Consider the following 441-residue polypeptide: Protein eva-1 homolog C (441 aa).

The segment at 1–23 (MLLPGRARQPPTPQPVQHPGLRR) is disordered. An N-terminal signal peptide occupies residues 1 to 48 (MLLPGRARQPPTPQPVQHPGLRRQVEPPGQLLRLFYCTVLVCSKEISA). Topologically, residues 49–322 (LTDFSGYLTK…AYIRAHPERA (274 aa)) are extracellular. N-linked (GlcNAc...) asparagine glycosylation is present at asparagine 62. The SUEL-type lectin 1 domain occupies 67–159 (ACDGDYLNLQ…KYLLVSFKCQ (93 aa)). Asparagine 165 carries N-linked (GlcNAc...) asparagine glycosylation. The 93-residue stretch at 168 to 260 (VCEDQELKLH…KYLTVTYACV (93 aa)) folds into the SUEL-type lectin 2 domain. A helical transmembrane segment spans residues 323–343 (ALLFVSSVCIGLALTLCALVI). Topologically, residues 344–441 (RESCAKDFRD…SLPRNMGQFY (98 aa)) are cytoplasmic. The interval 362–390 (VPGSDKVEEDSEDEEEEEDPSESDFPGEL) is disordered. Residues 368–383 (VEEDSEDEEEEEDPSE) are compositionally biased toward acidic residues.

Belongs to the EVA1 family. In terms of tissue distribution, ubiquitous.

It localises to the membrane. Functionally, binds heparin. This Homo sapiens (Human) protein is Protein eva-1 homolog C (EVA1C).